Consider the following 489-residue polypeptide: 5'-AMP-activated protein kinase subunit gamma-3 (489 aa).

Residues 1-95 form a disordered region; that stretch reads MEPELEHTLP…TRQEATFPKA (95 aa). Residues 32-47 show a composition bias toward polar residues; it reads GENSWPSPAVATSSER. CBS domains follow at residues 197–258, 280–340, and 355–415; these read MATS…RSPL, CFKP…LLPR, and TFRD…HLDM. ADP-binding positions include R225, 240–245, V285, 306–307, and K325; these read MLTITD and HR. AMP-binding positions include R225, 240 to 245, V285, H306, 306 to 307, K325, T355, A360, 381 to 382, 397 to 400, R424, L432, H453, 453 to 454, and 469 to 472; these read MLTITD, HR, SA, SRFD, and SLSD. ATP is bound by residues R225, 240-245, V285, 306-307, R307, and K325; these read MLTITD and HR. Positions 293–314 match the AMPK pseudosubstrate motif; it reads LFEAVYALIKNRIHRLPVLDPV. ADP-binding positions include 397 to 400, R424, L432, and 453 to 454; these read SRFD and HR. ATP is bound by residues 397-400, R424, L432, and 453-454; these read SRFD and HR. One can recognise a CBS 4 domain in the interval 427–486; sequence CLEGVLSCQPHESLGEVIDRIAREQVHRLVLVDETQHLLGVVSLSDILQALVLSPAGIDA.

Belongs to the 5'-AMP-activated protein kinase gamma subunit family. In terms of assembly, AMPK is a heterotrimer of an alpha catalytic subunit (PRKAA1 or PRKAA2), a beta (PRKAB1 or PRKAB2) and a gamma non-catalytic subunits (PRKAG1, PRKAG2 or PRKAG3). Interacts with FNIP1 and FNIP2. In terms of processing, phosphorylated by ULK1; leading to negatively regulate AMPK activity and suggesting the existence of a regulatory feedback loop between ULK1 and AMPK. Post-translationally, glycosylated; O-GlcNAcylated by OGT, promoting the AMP-activated protein kinase (AMPK) activity.

Functionally, AMP/ATP-binding subunit of AMP-activated protein kinase (AMPK), an energy sensor protein kinase that plays a key role in regulating cellular energy metabolism. In response to reduction of intracellular ATP levels, AMPK activates energy-producing pathways and inhibits energy-consuming processes: inhibits protein, carbohydrate and lipid biosynthesis, as well as cell growth and proliferation. AMPK acts via direct phosphorylation of metabolic enzymes, and by longer-term effects via phosphorylation of transcription regulators. AMPK also acts as a regulator of cellular polarity by remodeling the actin cytoskeleton; probably by indirectly activating myosin. The AMPK gamma3 subunit is a non-catalytic subunit with a regulatory role in muscle energy metabolism. It mediates binding to AMP, ADP and ATP, leading to AMPK activation or inhibition: AMP-binding results in allosteric activation of alpha catalytic subunit (PRKAA1 or PRKAA2) both by inducing phosphorylation and preventing dephosphorylation of catalytic subunits. ADP also stimulates phosphorylation, without stimulating already phosphorylated catalytic subunit. ATP promotes dephosphorylation of catalytic subunit, rendering the AMPK enzyme inactive. The protein is 5'-AMP-activated protein kinase subunit gamma-3 (Prkag3) of Mus musculus (Mouse).